We begin with the raw amino-acid sequence, 171 residues long: Ribosome maturation factor RimP (171 aa).

It belongs to the RimP family.

The protein resides in the cytoplasm. In terms of biological role, required for maturation of 30S ribosomal subunits. This is Ribosome maturation factor RimP from Anaeromyxobacter dehalogenans (strain 2CP-C).